Consider the following 445-residue polypeptide: Phosphoglucosamine mutase (445 aa).

Ser102 (phosphoserine intermediate) is an active-site residue. Positions 102, 241, 243, and 245 each coordinate Mg(2+). The residue at position 102 (Ser102) is a Phosphoserine.

The protein belongs to the phosphohexose mutase family. The cofactor is Mg(2+). In terms of processing, activated by phosphorylation.

It carries out the reaction alpha-D-glucosamine 1-phosphate = D-glucosamine 6-phosphate. Catalyzes the conversion of glucosamine-6-phosphate to glucosamine-1-phosphate. This is Phosphoglucosamine mutase from Acinetobacter baumannii (strain AB0057).